The primary structure comprises 322 residues: Porphobilinogen deaminase (322 aa).

At C252 the chain carries S-(dipyrrolylmethanemethyl)cysteine.

This sequence belongs to the HMBS family. Monomer. The cofactor is dipyrromethane.

It catalyses the reaction 4 porphobilinogen + H2O = hydroxymethylbilane + 4 NH4(+). It functions in the pathway porphyrin-containing compound metabolism; protoporphyrin-IX biosynthesis; coproporphyrinogen-III from 5-aminolevulinate: step 2/4. Functionally, tetrapolymerization of the monopyrrole PBG into the hydroxymethylbilane pre-uroporphyrinogen in several discrete steps. The chain is Porphobilinogen deaminase from Caulobacter vibrioides (strain ATCC 19089 / CIP 103742 / CB 15) (Caulobacter crescentus).